Here is a 620-residue protein sequence, read N- to C-terminus: Chaperone protein HscA homolog (620 aa).

Belongs to the heat shock protein 70 family.

Chaperone involved in the maturation of iron-sulfur cluster-containing proteins. Has a low intrinsic ATPase activity which is markedly stimulated by HscB. This Paracidovorax citrulli (strain AAC00-1) (Acidovorax citrulli) protein is Chaperone protein HscA homolog.